A 448-amino-acid chain; its full sequence is Phosphoglucosamine mutase (448 aa).

Residue S100 is the Phosphoserine intermediate of the active site. The Mg(2+) site is built by S100, D240, D242, and D244. Residue S100 is modified to Phosphoserine.

It belongs to the phosphohexose mutase family. Mg(2+) serves as cofactor. In terms of processing, activated by phosphorylation.

It catalyses the reaction alpha-D-glucosamine 1-phosphate = D-glucosamine 6-phosphate. Its function is as follows. Catalyzes the conversion of glucosamine-6-phosphate to glucosamine-1-phosphate. This chain is Phosphoglucosamine mutase, found in Clostridium perfringens (strain ATCC 13124 / DSM 756 / JCM 1290 / NCIMB 6125 / NCTC 8237 / Type A).